A 32-amino-acid polypeptide reads, in one-letter code: MELFHIRYLQAYLKVIGNYTCHLLFGTHKKTL.

This is an uncharacterized protein from Saccharomyces cerevisiae (strain ATCC 204508 / S288c) (Baker's yeast).